Reading from the N-terminus, the 93-residue chain is DNA-directed RNA polymerase subunit omega (93 aa).

The protein belongs to the RNA polymerase subunit omega family. In terms of assembly, the RNAP catalytic core consists of 2 alpha, 1 beta, 1 beta' and 1 omega subunit. When a sigma factor is associated with the core the holoenzyme is formed, which can initiate transcription.

The enzyme catalyses RNA(n) + a ribonucleoside 5'-triphosphate = RNA(n+1) + diphosphate. In terms of biological role, promotes RNA polymerase assembly. Latches the N- and C-terminal regions of the beta' subunit thereby facilitating its interaction with the beta and alpha subunits. The sequence is that of DNA-directed RNA polymerase subunit omega from Acinetobacter baylyi (strain ATCC 33305 / BD413 / ADP1).